The primary structure comprises 520 residues: Cytochrome P450 monooxygenase btcC (520 aa).

A helical membrane pass occupies residues 2-22; it reads IFLLTLAGLKVLSIVILFGII. The N-linked (GlcNAc...) asparagine glycan is linked to Asn177. Cys448 is a heme binding site. Residue Asn511 is glycosylated (N-linked (GlcNAc...) asparagine).

It belongs to the cytochrome P450 family. Heme serves as cofactor.

The protein resides in the membrane. The protein operates within secondary metabolite biosynthesis; terpenoid biosynthesis. In terms of biological role, cytochrome P4590 monooxygenase part of the gene cluster that mediates the biosynthesis of betaestacins. The bifunctional terpene synthase btcA converts isopentenyl diphosphate (IPP) and dimethylallyl diphosphate (DMAPP) into the sesterterpene betaestacin I. The C-terminal prenyltransferase (PT) domain of btcA catalyzes formation of GFPP, whereas the N-terminal terpene cyclase (TC) domain catalyzes the cyclization of GFPP into betaestacin I. The cytochrome P450 monooxygenase btcB oxidizes the C25 methyl group of betaestacin I to yield the carboxylic acid betaestacin IV via the alcohol betaestacin III. The cytochrome P450 monooxygenase btcC further catalyzes the multistep oxidation of betaestacin IV to produce several compounds, including betaestacins Va, Vb, Vc and VI. The sequence is that of Cytochrome P450 monooxygenase btcC from Colletotrichum orbiculare (strain 104-T / ATCC 96160 / CBS 514.97 / LARS 414 / MAFF 240422) (Cucumber anthracnose fungus).